The primary structure comprises 86 residues: Cytochrome c oxidase subunit 6B1 (86 aa).

Position 2 is an N-acetylalanine (alanine 2). Positions 27–73 (TRNCWQNYLDFHRCEKAMTAKGGDVSVCEWYRRVYKSLCPISWVSTW) constitute a CHCH domain. The short motif at 30 to 40 (CWQNYLDFHRC) is the Cx9C motif element. 2 cysteine pairs are disulfide-bonded: cysteine 30–cysteine 65 and cysteine 40–cysteine 54. Residues 54-65 (CEWYRRVYKSLC) carry the Cx10C motif motif. Lysine 62 carries the N6-acetyllysine modification.

It belongs to the cytochrome c oxidase subunit 6B family. In terms of assembly, component of the cytochrome c oxidase (complex IV, CIV), a multisubunit enzyme composed of 14 subunits. The complex is composed of a catalytic core of 3 subunits MT-CO1, MT-CO2 and MT-CO3, encoded in the mitochondrial DNA, and 11 supernumerary subunits COX4I, COX5A, COX5B, COX6A, COX6B, COX6C, COX7A, COX7B, COX7C, COX8 and NDUFA4, which are encoded in the nuclear genome. The complex exists as a monomer or a dimer and forms supercomplexes (SCs) in the inner mitochondrial membrane with NADH-ubiquinone oxidoreductase (complex I, CI) and ubiquinol-cytochrome c oxidoreductase (cytochrome b-c1 complex, complex III, CIII), resulting in different assemblies (supercomplex SCI(1)III(2)IV(1) and megacomplex MCI(2)III(2)IV(2)).

The protein resides in the mitochondrion inner membrane. The protein operates within energy metabolism; oxidative phosphorylation. In terms of biological role, component of the cytochrome c oxidase, the last enzyme in the mitochondrial electron transport chain which drives oxidative phosphorylation. The respiratory chain contains 3 multisubunit complexes succinate dehydrogenase (complex II, CII), ubiquinol-cytochrome c oxidoreductase (cytochrome b-c1 complex, complex III, CIII) and cytochrome c oxidase (complex IV, CIV), that cooperate to transfer electrons derived from NADH and succinate to molecular oxygen, creating an electrochemical gradient over the inner membrane that drives transmembrane transport and the ATP synthase. Cytochrome c oxidase is the component of the respiratory chain that catalyzes the reduction of oxygen to water. Electrons originating from reduced cytochrome c in the intermembrane space (IMS) are transferred via the dinuclear copper A center (CU(A)) of subunit 2 and heme A of subunit 1 to the active site in subunit 1, a binuclear center (BNC) formed by heme A3 and copper B (CU(B)). The BNC reduces molecular oxygen to 2 water molecules using 4 electrons from cytochrome c in the IMS and 4 protons from the mitochondrial matrix. The polypeptide is Cytochrome c oxidase subunit 6B1 (COX6B1) (Carlito syrichta (Philippine tarsier)).